Here is a 739-residue protein sequence, read N- to C-terminus: Ent-kaurene synthase-like 3 (739 aa).

Residues Asp475, Asp479, Asn619, Thr623, and Glu627 each contribute to the Mg(2+) site. The short motif at 475–479 (DDFFD) is the DDXXD motif element.

Belongs to the terpene synthase family. Mg(2+) serves as cofactor. As to expression, expressed in roots and stems.

This Oryza sativa subsp. japonica (Rice) protein is Ent-kaurene synthase-like 3 (KSL3).